The sequence spans 421 residues: Signal recognition particle receptor FtsY (421 aa).

GTP-binding positions include 228-235, 309-313, and 373-376; these read GINGAGKT, DTAGR, and TKLD.

This sequence belongs to the GTP-binding SRP family. FtsY subfamily. As to quaternary structure, part of the signal recognition particle protein translocation system, which is composed of SRP and FtsY. SRP is a ribonucleoprotein composed of Ffh and a 4.5S RNA molecule.

The protein resides in the cell inner membrane. The protein localises to the cytoplasm. It catalyses the reaction GTP + H2O = GDP + phosphate + H(+). Involved in targeting and insertion of nascent membrane proteins into the cytoplasmic membrane. Acts as a receptor for the complex formed by the signal recognition particle (SRP) and the ribosome-nascent chain (RNC). Interaction with SRP-RNC leads to the transfer of the RNC complex to the Sec translocase for insertion into the membrane, the hydrolysis of GTP by both Ffh and FtsY, and the dissociation of the SRP-FtsY complex into the individual components. In Neisseria meningitidis serogroup B (strain ATCC BAA-335 / MC58), this protein is Signal recognition particle receptor FtsY.